Here is a 270-residue protein sequence, read N- to C-terminus: Chromo domain-containing protein cec-4 (270 aa).

2 disordered regions span residues 1–24 (MAKK…ETSK) and 143–229 (KIAQ…KNDV). Residues 87-147 (YAVERVLAHR…HQEDLKIAQT (61 aa)) form the Chromo domain. Basic residues-rich tracts occupy residues 151-167 (TPSK…KRRA) and 187-197 (TPKQSTKKLKR). Residues 205–229 (LVEKSKKKAIPDLENHTLDQEKNDV) show a composition bias toward basic and acidic residues.

As to quaternary structure, interacts with mono-, di- and tri-methylated 'Lys-9' residues on histone H3. Weakly interacts with methylated 'Lys-37' residues on histone H3.

It localises to the nucleus inner membrane. Its subcellular location is the membrane. Chromatin anchor protein which binds to methylated lysine residues on histone H3, thereby recruiting heterochromatin to the nuclear periphery, especially in embryonic cells, with a lesser role in differentiated cells. May be required for the correct positioning of chromatin and nucleoli in embryos. In Caenorhabditis elegans, this protein is Chromo domain-containing protein cec-4.